The primary structure comprises 362 residues: Heat-inducible transcription repressor HrcA (362 aa).

This sequence belongs to the HrcA family.

In terms of biological role, negative regulator of class I heat shock genes (grpE-dnaK-dnaJ and groELS operons). Prevents heat-shock induction of these operons. In Rhodopseudomonas palustris (strain ATCC BAA-98 / CGA009), this protein is Heat-inducible transcription repressor HrcA.